The sequence spans 248 residues: Ribosomal RNA small subunit methyltransferase G (248 aa).

The interval 1–23 is disordered; it reads MFHVKHVGPVEPAAGDPEVPPVA. Residues Gly93, Leu98, 143-144, and Arg161 each bind S-adenosyl-L-methionine; that span reads AE. Positions 226–248 are disordered; that stretch reads VVSARRAKPPHPKSARTGKAGTR. A compositionally biased stretch (basic residues) spans 230–248; that stretch reads RRAKPPHPKSARTGKAGTR.

Belongs to the methyltransferase superfamily. RNA methyltransferase RsmG family.

The protein resides in the cytoplasm. Its function is as follows. Specifically methylates the N7 position of guanine in position 518 of 16S rRNA. This is Ribosomal RNA small subunit methyltransferase G from Mycolicibacterium paratuberculosis (strain ATCC BAA-968 / K-10) (Mycobacterium paratuberculosis).